The sequence spans 763 residues: Formin-like protein 4 (763 aa).

Residues 1–33 form the signal peptide; it reads MAAMLMQPWPPFLPHLTLVFLTLILFFPNQSFS. A disordered region spans residues 52-73; that stretch reads PPVQSPVLSPPQNPSSSSSDSD. The helical transmembrane segment at 80 to 100 threads the bilayer; it reads AVLITAASTLLVAAVFFFLVH. Disordered regions lie at residues 185–327 and 726–763; these read IYSK…DSDH and RSSM…DSDM. Polar residues predominate over residues 205–225; that stretch reads RSSTSHSVIHNDNYRNATTTH. The segment covering 229–238 has biased composition (basic and acidic residues); that stretch reads VKTDSFEFVK. Residues 240–280 show a composition bias toward pro residues; the sequence is DPTPPPPPPPPIPVKQSATPPPPPPPKLKNNGPSPPPPPPL. The segment covering 281-292 has biased composition (low complexity); the sequence is KKTAALSSSASK. Residues 303 to 738 enclose the FH2 domain; the sequence is SGESSNGQVK…MGSTQQRNAV (436 aa). Residues 316-327 are compositionally biased toward basic and acidic residues; sequence LHWDKVNPDSDH. The span at 726-736 shows a compositional bias: polar residues; that stretch reads RSSMGSTQQRN.

Belongs to the formin-like family. Class-I subfamily. Interacts with profilin. As to expression, expressed in the whole plant (at protein level).

Its subcellular location is the cell membrane. Its function is as follows. Might be involved in the organization and polarity of the actin cytoskeleton. In Arabidopsis thaliana (Mouse-ear cress), this protein is Formin-like protein 4 (FH4).